The sequence spans 540 residues: Phenylalanine--tRNA ligase beta subunit (540 aa).

Residues 268-342 (LRHTSVPFSL…MAYGYDRFTL (75 aa)) form the B5 domain. Positions 320, 326, 329, and 330 each coordinate Mg(2+).

This sequence belongs to the phenylalanyl-tRNA synthetase beta subunit family. Type 2 subfamily. In terms of assembly, tetramer of two alpha and two beta subunits. Mg(2+) is required as a cofactor.

The protein localises to the cytoplasm. It catalyses the reaction tRNA(Phe) + L-phenylalanine + ATP = L-phenylalanyl-tRNA(Phe) + AMP + diphosphate + H(+). The polypeptide is Phenylalanine--tRNA ligase beta subunit (Metallosphaera sedula (strain ATCC 51363 / DSM 5348 / JCM 9185 / NBRC 15509 / TH2)).